The primary structure comprises 140 residues: Small ribosomal subunit protein uS12 (140 aa).

2 disordered regions span residues 36 to 56 and 117 to 140; these read TYNPSPYKRGVCTRVGTMTPK and TSGVEKRRQQRSGYGAKRPKEKKE.

The protein belongs to the universal ribosomal protein uS12 family. Part of the 30S ribosomal subunit. Contacts proteins S8 and S17. May interact with IF1 in the 30S initiation complex.

Its function is as follows. With S4 and S5 plays an important role in translational accuracy. In terms of biological role, interacts with and stabilizes bases of the 16S rRNA that are involved in tRNA selection in the A site and with the mRNA backbone. Located at the interface of the 30S and 50S subunits, it traverses the body of the 30S subunit contacting proteins on the other side and probably holding the rRNA structure together. The combined cluster of proteins S8, S12 and S17 appears to hold together the shoulder and platform of the 30S subunit. This chain is Small ribosomal subunit protein uS12, found in Malacoplasma penetrans (strain HF-2) (Mycoplasma penetrans).